The chain runs to 240 residues: MORN repeat-containing protein 3 (240 aa).

The segment at C6 to G35 is interaction with MDM2. MORN repeat units follow at residues Y38–A60, Y62–T84, Y91–Y113, Y114–I136, Y137–R159, Y160–Q182, and F184–E205. An interaction with SIRT1 region spans residues T76–K100. The tract at residues A206 to D240 is interaction with TP53.

Interacts with MEIG1. Interacts with TP53, MDM2 and SIRT1; the interactions mediate post-transcriptional modifications of TP53 by MDM2 and SIRT1.

Its subcellular location is the cytoplasmic vesicle. It is found in the secretory vesicle. The protein resides in the acrosome. Assembles a suppression complex (suppresome) by tethering SIRT1 and MDM2 to regulate composite modifications of p53/TP53. Confers both deacetylation-mediated functional inactivation, by SIRT1, and ubiquitination-dependent degradation, by MDM2, of p53/TP53, promoting a proliferative and cell survival behaviors. May play a role in the regulation of spermatogenesis. In Homo sapiens (Human), this protein is MORN repeat-containing protein 3.